The primary structure comprises 256 residues: Hydroxypyruvate/pyruvate aldolase (256 aa).

The Proton acceptor role is filled by histidine 48. A divalent metal cation is bound by residues glutamate 152 and aspartate 178.

The protein belongs to the HpcH/HpaI aldolase family. A divalent metal cation is required as a cofactor.

The catalysed reaction is D-glyceraldehyde + pyruvate = 2-dehydro-3-deoxy-L-galactonate. Aldolase which can catalyze in vitro the aldolisation reaction between hydroxypyruvate (HPA) or pyruvate (PA) and D-glyceraldehyde (D-GA). The condensation of pyruvate and D-glyceraldehyde produces 2-dehydro-3-deoxy-L-galactonate as the major product. Has weak activity with hydroxypyruvate and D-glyceraldehyde. The polypeptide is Hydroxypyruvate/pyruvate aldolase (Roseobacter denitrificans (strain ATCC 33942 / OCh 114) (Erythrobacter sp. (strain OCh 114))).